The primary structure comprises 258 residues: Global transcriptional regulator CodY (258 aa).

Positions 1-156 (MSSLLDKTRM…SATIIGLEIL (156 aa)) are GAF domain. The H-T-H motif DNA-binding region spans 204-223 (ASKIADKVGITRSVIVNALR).

This sequence belongs to the CodY family.

The protein localises to the cytoplasm. Its function is as follows. DNA-binding global transcriptional regulator which is involved in the adaptive response to starvation and acts by directly or indirectly controlling the expression of numerous genes in response to nutrient availability. During rapid exponential growth, CodY is highly active and represses genes whose products allow adaptation to nutrient depletion. This is Global transcriptional regulator CodY from Clostridium botulinum (strain Okra / Type B1).